Reading from the N-terminus, the 80-residue chain is Conotoxin ArMKLT2-0321 (80 aa).

Residues 1–21 (MKLTCVLIIAMLFLIVCQLNT) form the signal peptide. The propeptide occupies 22-48 (ADDSTDKQEYRAVKLRDAMRNFKGSKR). Disulfide bonds link cysteine 50–cysteine 63, cysteine 57–cysteine 68, and cysteine 62–cysteine 77.

Belongs to the conotoxin O1 superfamily. In terms of tissue distribution, expressed by the venom duct.

It is found in the secreted. This chain is Conotoxin ArMKLT2-0321, found in Conus arenatus (Sand-dusted cone).